We begin with the raw amino-acid sequence, 223 residues long: Phosphoribosylformylglycinamidine synthase subunit PurQ (223 aa).

One can recognise a Glutamine amidotransferase type-1 domain in the interval 3-223; that stretch reads SAVVQLPGLN…FASALDVVAA (221 aa). Cys-86 (nucleophile) is an active-site residue. Active-site residues include His-196 and Glu-198.

As to quaternary structure, part of the FGAM synthase complex composed of 1 PurL, 1 PurQ and 2 PurS subunits.

It localises to the cytoplasm. The catalysed reaction is N(2)-formyl-N(1)-(5-phospho-beta-D-ribosyl)glycinamide + L-glutamine + ATP + H2O = 2-formamido-N(1)-(5-O-phospho-beta-D-ribosyl)acetamidine + L-glutamate + ADP + phosphate + H(+). It catalyses the reaction L-glutamine + H2O = L-glutamate + NH4(+). Its pathway is purine metabolism; IMP biosynthesis via de novo pathway; 5-amino-1-(5-phospho-D-ribosyl)imidazole from N(2)-formyl-N(1)-(5-phospho-D-ribosyl)glycinamide: step 1/2. Functionally, part of the phosphoribosylformylglycinamidine synthase complex involved in the purines biosynthetic pathway. Catalyzes the ATP-dependent conversion of formylglycinamide ribonucleotide (FGAR) and glutamine to yield formylglycinamidine ribonucleotide (FGAM) and glutamate. The FGAM synthase complex is composed of three subunits. PurQ produces an ammonia molecule by converting glutamine to glutamate. PurL transfers the ammonia molecule to FGAR to form FGAM in an ATP-dependent manner. PurS interacts with PurQ and PurL and is thought to assist in the transfer of the ammonia molecule from PurQ to PurL. The protein is Phosphoribosylformylglycinamidine synthase subunit PurQ of Rhizobium etli (strain ATCC 51251 / DSM 11541 / JCM 21823 / NBRC 15573 / CFN 42).